The following is a 140-amino-acid chain: Lipoprotein MlpD (140 aa).

Residues 1 to 17 (MKIINILFCLFLLMLNG) form the signal peptide. Cysteine 18 carries N-palmitoyl cysteine lipidation. Cysteine 18 is lipidated: S-diacylglycerol cysteine. A disordered region spans residues 22–53 (DTNNSQTKSRQKRDLTQKEATQEKPKSKEELL). Basic and acidic residues predominate over residues 33–53 (KRDLTQKEATQEKPKSKEELL).

It belongs to the Multicopy lipoprotein (Mlp) family.

Its subcellular location is the cell outer membrane. An outer membrane protein that may participate in pathogenesis. Some human Lyme disease patients have antibodies against this protein. The Mlp proteins probably undergo intragenic recombination, generating new alleles. This chain is Lipoprotein MlpD, found in Borreliella burgdorferi (strain ATCC 35210 / DSM 4680 / CIP 102532 / B31) (Borrelia burgdorferi).